The following is a 528-amino-acid chain: G patch domain-containing protein 2 (528 aa).

Residues 36–119 (LEESSEQARG…NKKDHSDSDD (84 aa)) are disordered. The segment covering 63 to 77 (RQARKRRGRKRRSYN) has biased composition (basic residues). Residues 98–117 (EPSKDYRENHNNNKKDHSDS) show a composition bias toward basic and acidic residues. A phosphoserine mark is found at Ser115, Ser117, Ser146, and Ser195. Disordered stretches follow at residues 232–282 (SEET…GDDE) and 487–528 (GRDG…GKSA). A compositionally biased stretch (basic and acidic residues) spans 239 to 252 (NKDKMECEEQKVSD). In terms of domain architecture, G-patch spans 467-513 (ENNIGNRMLQNMGWTPGSGLGRDGKGISEPIQAMQRPKGLGLGFPLP). Residues 514–528 (KSTSATTTPNAGKSA) are compositionally biased toward polar residues.

As to quaternary structure, interacts with DHX15. As to expression, testis.

It is found in the nucleus speckle. Its subcellular location is the nucleus. The protein localises to the nucleolus. In terms of biological role, enhances the ATPase activity of DHX15 in vitro. The polypeptide is G patch domain-containing protein 2 (GPATCH2) (Homo sapiens (Human)).